The primary structure comprises 194 residues: MFDARRPKALITGTPGVGKTTHCRKLAAFLNTKCISVGELLAGTPYVTYIPELDTYEIVDLDGAVKRVHSVVEPGHIIDTHVVELVPDPEVVIVLRKAPDVLFAELKRRGWPLKKILDNVWAEILDVVLIKARERWGEVAQIDVTRRRPEETFELLKKCVAGGRCHSDVVDWLGYSEESGFLEFIERLSRSESF.

The ATP site is built by Gly-16, Gly-18, Lys-19, Thr-20, and Thr-21. The segment at 36–59 (SVGELLAGTPYVTYIPELDTYEIV) is NMP. Positions 108–118 (RRGWPLKKILD) are LID. An ATP-binding site is contributed by Arg-109.

Belongs to the adenylate kinase family. AK6 subfamily. In terms of assembly, interacts with uS11. Not a structural component of 40S pre-ribosomes, but transiently interacts with them by binding to uS11.

It carries out the reaction AMP + ATP = 2 ADP. The enzyme catalyses ATP + H2O = ADP + phosphate + H(+). In terms of biological role, broad-specificity nucleoside monophosphate (NMP) kinase that catalyzes the reversible transfer of the terminal phosphate group between nucleoside triphosphates and monophosphates. Also has ATPase activity. Involved in the late maturation steps of the 30S ribosomal particles, specifically 16S rRNA maturation. While NMP activity is not required for ribosome maturation, ATPase activity is. Associates transiently with small ribosomal subunit protein uS11. ATP hydrolysis breaks the interaction with uS11. May temporarily remove uS11 from the ribosome to enable a conformational change of the ribosomal RNA that is needed for the final maturation step of the small ribosomal subunit. In Pyrobaculum aerophilum (strain ATCC 51768 / DSM 7523 / JCM 9630 / CIP 104966 / NBRC 100827 / IM2), this protein is Putative adenylate kinase.